The sequence spans 258 residues: Agamous-like MADS-box protein AGL3 (258 aa).

Residues 3–57 (RGKVELKRIENKINRQVTFAKRRNGLLKKAYELSVLCDAEIALLIFSNRGKLYEF) enclose the MADS-box domain. One can recognise a K-box domain in the interval 88–178 (LQDKYQDYLK…RRKLEDSDAA (91 aa)). The segment at 186–214 (SSAAEQQQQHQQQQQGMSSYQSNPPIQEA) is disordered. The segment covering 191 to 200 (QQQQHQQQQQ) has biased composition (low complexity). Residues 201 to 210 (GMSSYQSNPP) show a composition bias toward polar residues.

As to quaternary structure, forms homodimers. Interacts with TT16/AGL32. In terms of tissue distribution, expressed in aerial vegetative organs and flowers, but not in roots. Expressed in flower primordia.

Its subcellular location is the nucleus. Its function is as follows. Probable transcription factor that binds specifically to the CArG box DNA sequence 5'-CC (A/T)6 GG-3'. Plays an important role in the determination of flower meristem identity. Involved in the specification of sepal identity. Contributes to the development of petals, stamens and carpels. In Arabidopsis thaliana (Mouse-ear cress), this protein is Agamous-like MADS-box protein AGL3 (AGL3).